The following is a 443-amino-acid chain: Mitochondrial enolase superfamily member 1 (443 aa).

Substrate is bound by residues 24 to 26 (GAD) and Tyr34. Ser148 carries the phosphoserine modification. Substrate is bound at residue Lys220. Lys222 serves as the catalytic Proton donor/acceptor. Asp250 lines the Mg(2+) pocket. Substrate contacts are provided by residues Asn252, Glu276, Glu305, 355–357 (HAG), and Glu386. Glu276 and Glu305 together coordinate Mg(2+). The active site involves His355.

It belongs to the mandelate racemase/muconate lactonizing enzyme family. ENOSF1 subfamily. The cofactor is Mg(2+). In terms of processing, could be sumoylated.

The protein resides in the mitochondrion. It catalyses the reaction L-fuconate = 2-dehydro-3-deoxy-L-fuconate + H2O. Functionally, plays a role in the catabolism of L-fucose, a sugar that is part of the carbohydrates that are attached to cellular glycoproteins. Catalyzes the dehydration of L-fuconate to 2-keto-3-deoxy-L-fuconate by the abstraction of the 2-proton to generate an enediolate intermediate that is stabilized by the magnesium ion. This chain is Mitochondrial enolase superfamily member 1 (ENOSF1), found in Homo sapiens (Human).